Here is a 324-residue protein sequence, read N- to C-terminus: MFARYTFRCSQPLAQSVRKYSSEAPAKSSRIPLIGGITLAAGAGYYYYWQTTSAKSEPKERSTVFKGGDQGWIGLKLAHIDNVNHNVKKLRFEFEDPESVSGLHIASALLTKYKGLTDEKPTIRPYTPVSDEGMWASLGYLDLLVKRYPNGPMSNHLHNMAVGQRLDFKGPLPKYPWEPSKHDHICLIAGGTGITPMYQLVRKIFSNPEDKTKVTLVFANVTEEDILLRKEFEHLENTYPRRFRAFYTLDKPPKNWAQGTGFITKDLLKTVLPEPKTENIKIFVCGPPAMYKAISGQKVSPKDQGELSGILKELGYSKEQVYKF.

The chain crosses the membrane as a helical span at residues 31 to 47 (IPLIGGITLAAGAGYYY). Positions 70 to 178 (QGWIGLKLAH…KGPLPKYPWE (109 aa)) constitute an FAD-binding FR-type domain. Residue 181–216 (KHDHICLIAGGTGITPMYQLVRKIFSNPEDKTKVTL) participates in FAD binding.

The protein belongs to the flavoprotein pyridine nucleotide cytochrome reductase family. FAD serves as cofactor.

It is found in the mitochondrion outer membrane. It carries out the reaction 2 Fe(III)-[cytochrome b5] + NADH = 2 Fe(II)-[cytochrome b5] + NAD(+) + H(+). Its function is as follows. May mediate the reduction of outer membrane cytochrome b5. The polypeptide is NADH-cytochrome b5 reductase 2 (MCR1) (Ajellomyces capsulatus (strain NAm1 / WU24) (Darling's disease fungus)).